A 258-amino-acid chain; its full sequence is Imidazole glycerol phosphate synthase subunit HisF (258 aa).

Active-site residues include Asp11 and Asp130.

It belongs to the HisA/HisF family. In terms of assembly, heterodimer of HisH and HisF.

It localises to the cytoplasm. It catalyses the reaction 5-[(5-phospho-1-deoxy-D-ribulos-1-ylimino)methylamino]-1-(5-phospho-beta-D-ribosyl)imidazole-4-carboxamide + L-glutamine = D-erythro-1-(imidazol-4-yl)glycerol 3-phosphate + 5-amino-1-(5-phospho-beta-D-ribosyl)imidazole-4-carboxamide + L-glutamate + H(+). It functions in the pathway amino-acid biosynthesis; L-histidine biosynthesis; L-histidine from 5-phospho-alpha-D-ribose 1-diphosphate: step 5/9. Functionally, IGPS catalyzes the conversion of PRFAR and glutamine to IGP, AICAR and glutamate. The HisF subunit catalyzes the cyclization activity that produces IGP and AICAR from PRFAR using the ammonia provided by the HisH subunit. The protein is Imidazole glycerol phosphate synthase subunit HisF of Rhodospirillum centenum (strain ATCC 51521 / SW).